A 495-amino-acid chain; its full sequence is COP9 signalosome complex subunit 2 (495 aa).

The disordered stretch occupies residues 1–26 (MGDEYMDDDEDYGFEYEDDSGSEPDV). A PCI domain is found at 254–416 (AHTDFFEAFK…GMIEMPKNKK (163 aa)). Residues 426–468 (PNAGDQGTTKSDSKPGTSSEPSTTTSVTSSILQGPPATSSCHQ) are disordered. Polar residues predominate over residues 430 to 441 (DQGTTKSDSKPG). Over residues 442–455 (TSSEPSTTTSVTSS) the composition is skewed to low complexity.

It belongs to the CSN2 family. Component of the CSN complex, probably composed of csn-1, csn-2, csn-3, csn-4, csn-5, csn-6 and csn-7. Within the complex it probably interacts directly with csn-1, csn-3 and csn-4.

Its subcellular location is the cytoplasm. The protein resides in the nucleus. Essential component of the COP9 signalosome complex (CSN), a complex involved in various cellular and developmental processes. The CSN complex is an essential regulator of the ubiquitin (Ubl) conjugation pathway by mediating the deneddylation of the cullin subunits of the SCF-type E3 ligase complexes, leading to decrease the Ubl ligase activity of SCF. The CSN complex plays an essential role in embryogenesis and oogenesis and is required to regulate microtubule stability in the early embryo. Mediates mei-3/katanin targeting for degradation at the meiosis to mitosis transition via deneddylation of cul-3. In Caenorhabditis elegans, this protein is COP9 signalosome complex subunit 2 (csn-2).